A 148-amino-acid polypeptide reads, in one-letter code: 3-dehydroquinate dehydratase (148 aa).

Tyr-26 serves as the catalytic Proton acceptor. Positions 77, 83, and 90 each coordinate substrate. Catalysis depends on His-103, which acts as the Proton donor. Residues 104–105 (LS) and Arg-114 contribute to the substrate site.

It belongs to the type-II 3-dehydroquinase family. Homododecamer.

The enzyme catalyses 3-dehydroquinate = 3-dehydroshikimate + H2O. It participates in metabolic intermediate biosynthesis; chorismate biosynthesis; chorismate from D-erythrose 4-phosphate and phosphoenolpyruvate: step 3/7. Its function is as follows. Catalyzes a trans-dehydration via an enolate intermediate. The sequence is that of 3-dehydroquinate dehydratase (aroQ) from Pasteurella multocida (strain Pm70).